The sequence spans 576 residues: Glucose-6-phosphate 1-dehydrogenase 1, chloroplastic (576 aa).

Residues methionine 1–arginine 50 constitute a chloroplast transit peptide. NADP(+) contacts are provided by residues glycine 97–lysine 104 and arginine 131. Cysteine 149 and cysteine 157 form a disulfide bridge. Lysine 234 provides a ligand contact to NADP(+). Residues lysine 234, histidine 264–lysine 268, glutamate 302, and aspartate 321 contribute to the D-glucose 6-phosphate site. The active-site Proton acceptor is the histidine 326. Lysine 419 contributes to the NADP(+) binding site. Lysine 422 and arginine 427 together coordinate D-glucose 6-phosphate. Residues arginine 432 and arginine 461 each coordinate NADP(+). Glutamine 463 lines the D-glucose 6-phosphate pocket. Residues tyrosine 469–arginine 471 and arginine 554 each bind NADP(+).

The protein belongs to the glucose-6-phosphate dehydrogenase family. As to quaternary structure, forms homodimer. Interacts with G6PD2, G6PD3 and G6PD4. In terms of tissue distribution, expressed in leaves, stems, buds, flowers and siliques.

Its subcellular location is the plastid. It localises to the chloroplast stroma. It is found in the peroxisome. The enzyme catalyses D-glucose 6-phosphate + NADP(+) = 6-phospho-D-glucono-1,5-lactone + NADPH + H(+). It functions in the pathway carbohydrate degradation; pentose phosphate pathway; D-ribulose 5-phosphate from D-glucose 6-phosphate (oxidative stage): step 1/3. Regulated by metabolites. Post-translationally inactivated by cysteine-mediated redox modification via the ferredoxin-thioredoxin system in the light and this avoids futile cycles with photosynthetic CO2 fixation. Catalyzes the rate-limiting step of the oxidative pentose-phosphate pathway, which represents a route for the dissimilation of carbohydrates besides glycolysis. The main function of this enzyme is to provide reducing power (NADPH) and pentose phosphates for fatty acid and nucleic acid synthesis which are involved in membrane synthesis and cell division. This is Glucose-6-phosphate 1-dehydrogenase 1, chloroplastic from Arabidopsis thaliana (Mouse-ear cress).